A 155-amino-acid polypeptide reads, in one-letter code: Endoribonuclease YbeY (155 aa).

Zn(2+)-binding residues include His114, His118, and His124.

This sequence belongs to the endoribonuclease YbeY family. Requires Zn(2+) as cofactor.

The protein localises to the cytoplasm. Single strand-specific metallo-endoribonuclease involved in late-stage 70S ribosome quality control and in maturation of the 3' terminus of the 16S rRNA. This Shigella dysenteriae serotype 1 (strain Sd197) protein is Endoribonuclease YbeY.